A 244-amino-acid chain; its full sequence is Small ribosomal subunit protein eS4 (244 aa).

Positions 1 to 14 are enriched in basic residues; sequence MANKGPRKHLKRLP. Residues 1–36 form a disordered region; sequence MANKGPRKHLKRLPAPKNWQISRKTNKYTTRPSAGP. Residues 19–32 are compositionally biased toward polar residues; the sequence is WQISRKTNKYTTRP. Residues 43-106 enclose the S4 RNA-binding domain; the sequence is LPLLLVLRDL…NESFLVVLDE (64 aa).

It belongs to the eukaryotic ribosomal protein eS4 family.

In Methanococcus aeolicus (strain ATCC BAA-1280 / DSM 17508 / OCM 812 / Nankai-3), this protein is Small ribosomal subunit protein eS4.